The primary structure comprises 109 residues: A-type ATP synthase subunit F (109 aa).

The protein belongs to the V-ATPase F subunit family. As to quaternary structure, has multiple subunits with at least A(3), B(3), C, D, E, F, H, I and proteolipid K(x).

The protein resides in the cell membrane. Its function is as follows. Component of the A-type ATP synthase that produces ATP from ADP in the presence of a proton gradient across the membrane. In Halorubrum lacusprofundi (strain ATCC 49239 / DSM 5036 / JCM 8891 / ACAM 34), this protein is A-type ATP synthase subunit F.